A 586-amino-acid chain; its full sequence is 3-hydroxy-3-methylglutaryl-coenzyme A reductase 3 (586 aa).

Transmembrane regions (helical) follow at residues 36–59 and 87–107; these read PSDYSLPLSLYLANALVFSLFFSV and ALICLVASVIYLLGFFGIGFV. The tract at residues 108-170 is linker; that stretch reads HSFSRASTDS…STTTTSTLSD (63 aa). Catalytic regions lie at residues 171–586 and 172–586; these read DDEQ…KITF and DEQI…KITF. Residues glutamate 265, lysine 397, and aspartate 473 each act as charge relay system in the active site. The active-site Proton donor is the histidine 571. N-linked (GlcNAc...) asparagine glycosylation occurs at asparagine 575.

This sequence belongs to the HMG-CoA reductase family.

The protein resides in the endoplasmic reticulum membrane. It localises to the mitochondrion membrane. It is found in the plastid membrane. The enzyme catalyses (R)-mevalonate + 2 NADP(+) + CoA = (3S)-3-hydroxy-3-methylglutaryl-CoA + 2 NADPH + 2 H(+). The protein operates within metabolic intermediate biosynthesis; (R)-mevalonate biosynthesis; (R)-mevalonate from acetyl-CoA: step 3/3. Its function is as follows. Catalyzes the synthesis of mevalonate. The specific precursor of all isoprenoid compounds present in plants. The polypeptide is 3-hydroxy-3-methylglutaryl-coenzyme A reductase 3 (HMGR3) (Hevea brasiliensis (Para rubber tree)).